The following is a 284-amino-acid chain: 4-diphosphocytidyl-2-C-methyl-D-erythritol kinase (284 aa).

Lys-9 is an active-site residue. 90-100 (PLVSGLGGDSS) lines the ATP pocket. The active site involves Asp-132.

Belongs to the GHMP kinase family. IspE subfamily.

It carries out the reaction 4-CDP-2-C-methyl-D-erythritol + ATP = 4-CDP-2-C-methyl-D-erythritol 2-phosphate + ADP + H(+). It participates in isoprenoid biosynthesis; isopentenyl diphosphate biosynthesis via DXP pathway; isopentenyl diphosphate from 1-deoxy-D-xylulose 5-phosphate: step 3/6. Catalyzes the phosphorylation of the position 2 hydroxy group of 4-diphosphocytidyl-2C-methyl-D-erythritol. In Dehalococcoides mccartyi (strain ATCC BAA-2100 / JCM 16839 / KCTC 5957 / BAV1), this protein is 4-diphosphocytidyl-2-C-methyl-D-erythritol kinase.